A 492-amino-acid polypeptide reads, in one-letter code: Catalase-1/2 (492 aa).

Active-site residues include His65 and Asn138. Residue Tyr348 coordinates heme.

Belongs to the catalase family. As to quaternary structure, homotetramer. Heme serves as cofactor.

The protein resides in the cytoplasm. Its subcellular location is the cytosol. It is found in the peroxisome matrix. The enzyme catalyses 2 H2O2 = O2 + 2 H2O. In terms of biological role, catalyzes the degradation of hydrogen peroxide (H(2)O(2)) generated by peroxisomal oxidases to water and oxygen, thereby protecting cells from the toxic effects of hydrogen peroxide. The chain is Catalase-1/2 (CAT1) from Glycine max (Soybean).